The primary structure comprises 155 residues: Small ribosomal subunit protein uS7c (155 aa).

Belongs to the universal ribosomal protein uS7 family. As to quaternary structure, part of the 30S ribosomal subunit.

The protein resides in the plastid. Its subcellular location is the chloroplast. Its function is as follows. One of the primary rRNA binding proteins, it binds directly to 16S rRNA where it nucleates assembly of the head domain of the 30S subunit. This Saururus cernuus (Lizard's tail) protein is Small ribosomal subunit protein uS7c (rps7).